Here is a 542-residue protein sequence, read N- to C-terminus: CTP synthase (542 aa).

The interval 1 to 265 (MARYVFITGG…DSEVLSAFGM (265 aa)) is amidoligase domain. Serine 13 is a CTP binding site. A UTP-binding site is contributed by serine 13. 14–19 (SLGKGI) contributes to the ATP binding site. Residue tyrosine 54 participates in L-glutamine binding. Residue aspartate 71 coordinates ATP. Positions 71 and 139 each coordinate Mg(2+). Residues 146-148 (DIE), 186-191 (KTKPTQ), and lysine 222 contribute to the CTP site. UTP is bound by residues 186–191 (KTKPTQ) and lysine 222. In terms of domain architecture, Glutamine amidotransferase type-1 spans 291–541 (TIAVVGKYTG…IEATVEQSRL (251 aa)). Alanine 353 lines the L-glutamine pocket. The Nucleophile; for glutamine hydrolysis role is filled by cysteine 380. L-glutamine contacts are provided by residues 381–384 (FGMQ), glutamate 404, and arginine 469. Residues histidine 514 and glutamate 516 contribute to the active site.

The protein belongs to the CTP synthase family. Homotetramer.

The catalysed reaction is UTP + L-glutamine + ATP + H2O = CTP + L-glutamate + ADP + phosphate + 2 H(+). It carries out the reaction L-glutamine + H2O = L-glutamate + NH4(+). The enzyme catalyses UTP + NH4(+) + ATP = CTP + ADP + phosphate + 2 H(+). It participates in pyrimidine metabolism; CTP biosynthesis via de novo pathway; CTP from UDP: step 2/2. Allosterically activated by GTP, when glutamine is the substrate; GTP has no effect on the reaction when ammonia is the substrate. The allosteric effector GTP functions by stabilizing the protein conformation that binds the tetrahedral intermediate(s) formed during glutamine hydrolysis. Inhibited by the product CTP, via allosteric rather than competitive inhibition. Catalyzes the ATP-dependent amination of UTP to CTP with either L-glutamine or ammonia as the source of nitrogen. Regulates intracellular CTP levels through interactions with the four ribonucleotide triphosphates. This Bartonella henselae (strain ATCC 49882 / DSM 28221 / CCUG 30454 / Houston 1) (Rochalimaea henselae) protein is CTP synthase.